The following is a 240-amino-acid chain: Ribonuclease 3 (240 aa).

The 133-residue stretch at 9 to 141 (VEEFQKKTGI…LLAAIYLDQG (133 aa)) folds into the RNase III domain. Position 54 (Glu54) interacts with Mg(2+). Asp58 is an active-site residue. Asp127 and Glu130 together coordinate Mg(2+). Residue Glu130 is part of the active site. Residues 168 to 237 (DYKTALQEIV…ARIAYEKLLK (70 aa)) enclose the DRBM domain.

It belongs to the ribonuclease III family. As to quaternary structure, homodimer. Mg(2+) is required as a cofactor.

Its subcellular location is the cytoplasm. It catalyses the reaction Endonucleolytic cleavage to 5'-phosphomonoester.. Digests double-stranded RNA. Involved in the processing of primary rRNA transcript to yield the immediate precursors to the large and small rRNAs (23S and 16S). Processes some mRNAs, and tRNAs when they are encoded in the rRNA operon. Processes pre-crRNA and tracrRNA of type II CRISPR loci if present in the organism. This chain is Ribonuclease 3, found in Thermotoga petrophila (strain ATCC BAA-488 / DSM 13995 / JCM 10881 / RKU-1).